Reading from the N-terminus, the 360-residue chain is Decorin (360 aa).

The signal sequence occupies residues 1–16 (MKATIIFLLVAQVSWA). Residues 17-30 (GPFQQKGLFDFMLE) constitute a propeptide that is removed on maturation. A glycan (O-linked (Xyl...) (glycosaminoglycan) serine) is linked at Ser34. Intrachain disulfides connect Cys55-Cys61 and Cys59-Cys68. LRR repeat units follow at residues 74 to 94 (EKVPKDLPPDTALLDLQNNKI), 95 to 118 (TEIKDGDFKNLKNLHTLILINNKI), 119 to 142 (SKISPGAFAPLVKLERLYLSKNQL), 143 to 163 (KELPEKMPKTLQELRVHENEI), 164 to 187 (TKVRKSVFNGLNQMIVVELGTNPL), 188 to 213 (KSSGIENGAFQGMKKLSYIRIADTNI), 214 to 234 (TTIPQGLPPSLTELHLDGNKI), 235 to 258 (TKVDAASLKGLNNLAKLGLSFNSI), 259 to 282 (SAVDNGSLANTPHLRELHLNNNKL), 283 to 305 (VKVPGGLADHKYIQVVYLHNNNI), 306 to 335 (SAIGSNDFCPPGYNTKKASYSGVSLFSNPV), and 336 to 360 (QYWEIQPSTFRCVYVRAAVQLGNYK). Asn212 is a glycosylation site (N-linked (GlcNAc...) asparagine). 2 N-linked (GlcNAc...) asparagine glycosylation sites follow: Asn263 and Asn304. Cys314 and Cys347 are joined by a disulfide.

The protein belongs to the small leucine-rich proteoglycan (SLRP) family. SLRP class I subfamily. In terms of assembly, binds to type I and type II collagen, fibronectin and TGF-beta. Forms a ternary complex with MFAP2 and ELN. Interacts with DPT. Post-translationally, the attached glycosaminoglycan chain can be either chondroitin 4-sulfate, chondroitin 6-sulfate or dermatan sulfate, depending upon the tissue of origin.

It localises to the secreted. It is found in the extracellular space. Its subcellular location is the extracellular matrix. Functionally, may affect the rate of fibrils formation. This Bos taurus (Bovine) protein is Decorin (DCN).